The following is an 800-amino-acid chain: Cation/H(+) antiporter 9 (800 aa).

12 helical membrane-spanning segments follow: residues 43-63 (VIFG…FVCI), 73-93 (IGIP…PQLL), 110-130 (NVAL…LMGV), 145-165 (IVIA…FRNF), 186-206 (VIVS…VYEL), 216-236 (IAIS…VCIS), 247-267 (GIAN…LFIF), 287-306 (VYLY…LSVF), 338-358 (LVTN…ADVV), 371-391 (ILLL…PCLI), 401-421 (VIIA…FDVA), and 430-450 (ATYT…PTII).

It belongs to the monovalent cation:proton antiporter 2 (CPA2) transporter (TC 2.A.37) family. CHX (TC 2.A.37.4) subfamily.

The protein localises to the membrane. In terms of biological role, may operate as a cation/H(+) antiporter. In Arabidopsis thaliana (Mouse-ear cress), this protein is Cation/H(+) antiporter 9 (CHX9).